A 302-amino-acid chain; its full sequence is Glutaminase (302 aa).

Substrate is bound by residues Ser61, Asn111, Glu155, Asn162, Tyr186, Tyr238, and Val256.

This sequence belongs to the glutaminase family. As to quaternary structure, homotetramer.

The enzyme catalyses L-glutamine + H2O = L-glutamate + NH4(+). The polypeptide is Glutaminase (Pseudomonas putida (strain ATCC 700007 / DSM 6899 / JCM 31910 / BCRC 17059 / LMG 24140 / F1)).